A 1559-amino-acid chain; its full sequence is Fatty acid synthase alpha subunit stcJ (1559 aa).

Residues 68-147 enclose the Carrier domain; it reads DTPLTAIFII…AALGEVSLGP (80 aa). Position 106 is an O-(pantetheine 4'-phosphoryl)serine (Ser106). The tract at residues 457 to 693 is ketoreductase (KR) domain; that stretch reads NHTYLITGAG…SLLLTPQLAT (237 aa). The Ketosynthase family 3 (KS3) domain maps to 873-1327; that stretch reads REVFQEIVLE…QKEAQLVGVH (455 aa). Residue Cys1058 is the For beta-ketoacyl synthase activity of the active site. Residues 1105–1117 are compositionally biased toward basic and acidic residues; it reads VRDEQARGREPGE. The interval 1105-1125 is disordered; the sequence is VRDEQARGREPGEMSRPTAAS. Residues His1212 and His1253 each act as for beta-ketoacyl synthase activity in the active site. Residue Asp1432 participates in Mg(2+) binding. Residues 1432 to 1434, 1480 to 1490, 1504 to 1506, and 1532 to 1534 contribute to the acetyl-CoA site; these read DTV, EAVFKCLQTVS, RVQ, and LSY. Ser1533 provides a ligand contact to Mg(2+).

The protein belongs to the thiolase-like superfamily. Fungal fatty acid synthetase subunit alpha family. In terms of assembly, [Alpha(6)beta(6)] hexamers of two multifunctional subunits (alpha and beta).

It catalyses the reaction acetyl-CoA + n malonyl-CoA + 2n NADPH + 4n H(+) = a long-chain-acyl-CoA + n CoA + n CO2 + 2n NADP(+).. It carries out the reaction a fatty acyl-[ACP] + malonyl-[ACP] + H(+) = a 3-oxoacyl-[ACP] + holo-[ACP] + CO2. The catalysed reaction is a (3R)-hydroxyacyl-[ACP] + NADP(+) = a 3-oxoacyl-[ACP] + NADPH + H(+). The protein operates within mycotoxin biosynthesis; sterigmatocystin biosynthesis. Functionally, fatty acid synthase alpha subunit; part of the gene cluster that mediates the biosynthesis of sterigmatocystin (ST), a polyketide-derived furanocoumarin which is part of the most toxic and carcinogenic compounds among the known mycotoxins. The first step in the biosynthesis of sterigmatocystin is the production of hexanoate by the fatty acid synthase (FAS) units stcJ and stcK. The polyketide backbone is assembled by the non-reducing polyketide synthase stcA by condensation of the starter hexanoyl-CoA and 7 malonyl-CoA extender units followed by cyclization and release of norsolorinic acid. Norsolorinic acid is the first stable intermediate in the biosynthesis of sterigmatocystin and is converted into averantin (AVN) by the ketoreductase stcE which reduces the hexanoate ketone to an alcohol. Averantin is then oxidized into 5'-hydroxyaverantin (HAVN) by the cytochrome P450 monooxygenase stcF. 5'-hydroxyaverantin is further converted to 5'-oxyaverantin (OAVN) by the 5'-hydroxyaverantin dehydrogenase stcG. The next step is the conversion of OAVN into averufin (AVF) which is catalyzed by a yet to be identified enzyme. The cytochrome P450 monooxygenase stcB and the flavin-binding monooxygenase stcW are both required for the conversion of averufin to 1-hydroxyversicolorone. The esterase stcI probably catalyzes the formation of versiconal hemiacetal acetate from 1-hydroxyversicolorone. The oxydoreductase stcN then probably catalyzes the biosynthetic step from versiconal to versicolorin B (VERB). The next step is performed by the versicolorin B desaturase stcL to produce versicolorin A (VERA). The ketoreductase stcU and the cytochrome P450 monooxygenase stcS are involved in the conversion of versicolorin A to demethylsterigmatocystin. The Baeyer-Villiger oxidas stcQ and the reductase stcR might be involved in the biosynthetic step from versicolorin A to demethylsterigmatocystin. The final step in the biosynthesis of sterigmatocystin is the methylation of demethylsterigmatocystin catalyzed by the methyltransferase stcP. The chain is Fatty acid synthase alpha subunit stcJ from Emericella nidulans (strain FGSC A4 / ATCC 38163 / CBS 112.46 / NRRL 194 / M139) (Aspergillus nidulans).